Here is a 701-residue protein sequence, read N- to C-terminus: DUF724 domain-containing protein 6 (701 aa).

Disordered regions lie at residues 299–353 and 374–452; these read MKTK…KRAN and VEPV…DESC. Positions 326–340 are enriched in basic and acidic residues; sequence LNLEKSAETLTKAES. The segment covering 381 to 399 has biased composition (polar residues); it reads RVRTATPLKQTKADTQGKS. Composition is skewed to basic and acidic residues over residues 403–412, 421–430, and 437–449; these read KTLEPMRDEN, KVLEEKNSEK, and RQEE…KETD. The DUF724 domain maps to 514-700; that stretch reads LPFAKKSPFW…LEFQSTASAP (187 aa). Residues 626-670 are a coiled coil; it reads LEKKIEAGEIEGHTYEEEMAELELKILELKRQQVVAKEMKEATDK.

Expressed in roots, stems and flowers.

The protein localises to the nucleus. May be involved in the polar growth of plant cells via transportation of RNAs. The polypeptide is DUF724 domain-containing protein 6 (Arabidopsis thaliana (Mouse-ear cress)).